We begin with the raw amino-acid sequence, 379 residues long: Homoserine O-succinyltransferase (379 aa).

Positions 48–357 (NAVLICHALS…SAHGHDAFLM (310 aa)) constitute an AB hydrolase-1 domain. The active-site Nucleophile is the Ser-154. A substrate-binding site is contributed by Arg-224. Residues Asp-319 and His-352 contribute to the active site. Residue Asp-353 coordinates substrate.

Belongs to the AB hydrolase superfamily. MetX family. As to quaternary structure, homodimer.

It localises to the cytoplasm. The catalysed reaction is L-homoserine + succinyl-CoA = O-succinyl-L-homoserine + CoA. It participates in amino-acid biosynthesis; L-methionine biosynthesis via de novo pathway; O-succinyl-L-homoserine from L-homoserine: step 1/1. Functionally, transfers a succinyl group from succinyl-CoA to L-homoserine, forming succinyl-L-homoserine. The sequence is that of Homoserine O-succinyltransferase from Neisseria meningitidis serogroup B (strain ATCC BAA-335 / MC58).